An 899-amino-acid polypeptide reads, in one-letter code: Protein translocase subunit SecA (899 aa).

Residues Gln87, 105 to 109, and Asp512 contribute to the ATP site; that span reads GEGKT. Disordered stretches follow at residues 573–592 and 861–899; these read RRIDNQLRGRSGRQGDPGSS and ITVNDDEHPAEPAKSQKNAGRNEPCPCGSGKKYKKCCGK. The Zn(2+) site is built by Cys885, Cys887, Cys896, and Cys897.

The protein belongs to the SecA family. As to quaternary structure, monomer and homodimer. Part of the essential Sec protein translocation apparatus which comprises SecA, SecYEG and auxiliary proteins SecDF-YajC and YidC. The cofactor is Zn(2+).

It is found in the cell inner membrane. The protein localises to the cytoplasm. The catalysed reaction is ATP + H2O + cellular proteinSide 1 = ADP + phosphate + cellular proteinSide 2.. Its function is as follows. Part of the Sec protein translocase complex. Interacts with the SecYEG preprotein conducting channel. Has a central role in coupling the hydrolysis of ATP to the transfer of proteins into and across the cell membrane, serving as an ATP-driven molecular motor driving the stepwise translocation of polypeptide chains across the membrane. This chain is Protein translocase subunit SecA, found in Trichlorobacter lovleyi (strain ATCC BAA-1151 / DSM 17278 / SZ) (Geobacter lovleyi).